The primary structure comprises 189 residues: Mitochondrial FAD-linked sulfhydryl oxidase ERV1 (189 aa).

In terms of domain architecture, ERV/ALR sulfhydryl oxidase spans 83–183 (DPPDVEQLGR…FDCNFWEKRW (101 aa)). Residues 88–95 (EQLGRSSW), His99, and Tyr128 each bind FAD. 2 disulfides stabilise this stretch: Cys130–Cys133 and Cys159–Cys176. Residues 159–171 (CEAH…KLRK) and 182–183 (RW) contribute to the FAD site.

As to quaternary structure, homodimer. Interacts with MIA40, forming transient intermolecular disulfide bridges. FAD serves as cofactor.

The protein localises to the mitochondrion intermembrane space. The enzyme catalyses 2 R'C(R)SH + O2 = R'C(R)S-S(R)CR' + H2O2. Its function is as follows. FAD-dependent sulfhydryl oxidase that catalyzes disulfide bond formation. Required for the import and folding of small cysteine-containing proteins in the mitochondrial intermembrane space (IMS). Forms a redox cycle with MIA40 that involves a disulfide relay system. Important for maintaining the cysteine residues in MIA40 in an oxidized state. Reduced ERV1 is reoxidized by cytochrome c. Required for the maturation of cytoplasmic, but not of mitochondrial Fe/S proteins. The polypeptide is Mitochondrial FAD-linked sulfhydryl oxidase ERV1 (ERV1) (Saccharomyces cerevisiae (strain ATCC 204508 / S288c) (Baker's yeast)).